An 82-amino-acid polypeptide reads, in one-letter code: uncharacterized protein (82 aa).

The interval 60-82 (YKRRRPDHMMKRNSPSYTGDHKT) is disordered.

This is an uncharacterized protein from Saccharomyces cerevisiae (strain ATCC 204508 / S288c) (Baker's yeast).